The chain runs to 591 residues: 2-succinyl-5-enolpyruvyl-6-hydroxy-3-cyclohexene-1-carboxylate synthase (591 aa).

The protein belongs to the TPP enzyme family. MenD subfamily. As to quaternary structure, homodimer. It depends on Mg(2+) as a cofactor. Mn(2+) is required as a cofactor. Requires thiamine diphosphate as cofactor.

It catalyses the reaction isochorismate + 2-oxoglutarate + H(+) = 5-enolpyruvoyl-6-hydroxy-2-succinyl-cyclohex-3-ene-1-carboxylate + CO2. It participates in quinol/quinone metabolism; 1,4-dihydroxy-2-naphthoate biosynthesis; 1,4-dihydroxy-2-naphthoate from chorismate: step 2/7. The protein operates within cofactor biosynthesis; phylloquinone biosynthesis. In terms of biological role, catalyzes the thiamine diphosphate-dependent decarboxylation of 2-oxoglutarate and the subsequent addition of the resulting succinic semialdehyde-thiamine pyrophosphate anion to isochorismate to yield 2-succinyl-5-enolpyruvyl-6-hydroxy-3-cyclohexene-1-carboxylate (SEPHCHC). The protein is 2-succinyl-5-enolpyruvyl-6-hydroxy-3-cyclohexene-1-carboxylate synthase of Rippkaea orientalis (strain PCC 8801 / RF-1) (Cyanothece sp. (strain PCC 8801)).